Consider the following 339-residue polypeptide: DNA-directed RNA polymerase subunit alpha (339 aa).

The interval 1-233 is alpha N-terminal domain (alpha-NTD); that stretch reads MVREEVAGST…DLFLPFLHAE (233 aa). Residues 264-339 form an alpha C-terminal domain (alpha-CTD) region; it reads KKGIPLNCIF…IDLLKNKLSF (76 aa).

It belongs to the RNA polymerase alpha chain family. In plastids the minimal PEP RNA polymerase catalytic core is composed of four subunits: alpha, beta, beta', and beta''. When a (nuclear-encoded) sigma factor is associated with the core the holoenzyme is formed, which can initiate transcription.

Its subcellular location is the plastid. The protein localises to the chloroplast. The enzyme catalyses RNA(n) + a ribonucleoside 5'-triphosphate = RNA(n+1) + diphosphate. Its function is as follows. DNA-dependent RNA polymerase catalyzes the transcription of DNA into RNA using the four ribonucleoside triphosphates as substrates. This is DNA-directed RNA polymerase subunit alpha from Crithopsis delileana.